A 319-amino-acid polypeptide reads, in one-letter code: Protein sprouty homolog 1 (319 aa).

At Met-1 the chain carries N-acetylmethionine. The segment at 54–160 (TEGPSVVKRP…ERAIRTQPKQ (107 aa)) is disordered. Over residues 69–79 (PRQEKHERTHE) the composition is skewed to basic and acidic residues. A compositionally biased stretch (low complexity) spans 112-131 (SRSTSTGSAASSGSNSSASS). Residues 183–295 (QCGKCKCGEC…CYDWIHRPGC (113 aa)) form the SPR domain.

The protein belongs to the sprouty family. As to quaternary structure, forms heterodimers with SPRY2. Interacts with TESK1. Interacts with CAV1 (via C-terminus).

It localises to the cytoplasm. Its subcellular location is the membrane. In terms of biological role, inhibits fibroblast growth factor (FGF)-induced retinal lens fiber differentiation, probably by inhibiting FGF-mediated phosphorylation of ERK1/2. Inhibits TGFB-induced epithelial-to-mesenchymal transition in lens epithelial cells. This chain is Protein sprouty homolog 1 (SPRY1), found in Cervus elaphus (Red deer).